The primary structure comprises 181 residues: Probable chemoreceptor glutamine deamidase CheD (181 aa).

It belongs to the CheD family.

The enzyme catalyses L-glutaminyl-[protein] + H2O = L-glutamyl-[protein] + NH4(+). Its function is as follows. Probably deamidates glutamine residues to glutamate on methyl-accepting chemotaxis receptors (MCPs), playing an important role in chemotaxis. This is Probable chemoreceptor glutamine deamidase CheD from Agrobacterium fabrum (strain C58 / ATCC 33970) (Agrobacterium tumefaciens (strain C58)).